A 208-amino-acid chain; its full sequence is Calaxin (208 aa).

EF-hand domains follow at residues 64–99 (TDDM…FLHG), 100–135 (TLEE…SLLK), and 145–180 (GVKD…ENLL). 13 residues coordinate Ca(2+): D77, D79, D81, D113, N115, D117, Y119, E124, D158, D160, D162, K164, and D169.

Component of the outer dynein arm-docking complex along with ODAD1, ODAD2, ODAD3 and ODAD4.

Its subcellular location is the cytoplasm. It localises to the cytoskeleton. The protein resides in the cilium axoneme. The protein localises to the cell projection. It is found in the cilium. Its subcellular location is the flagellum. Functionally, component of the outer dynein arm-docking complex (ODA-DC) that mediates outer dynein arms (ODA) binding onto the doublet microtubule. Seems to regulate the assembly of both ODAs and their axonemal docking complex onto ciliary microtubules. Regulates ciliary and flagellar motility and is required for cilia-driven determination of body laterality. The sequence is that of Calaxin (clxn) from Xenopus laevis (African clawed frog).